Consider the following 368-residue polypeptide: Quinolinate synthase (368 aa).

H46 and S63 together coordinate iminosuccinate. Residue C110 participates in [4Fe-4S] cluster binding. Iminosuccinate-binding positions include 141-143 (YVN) and S162. Position 230 (C230) interacts with [4Fe-4S] cluster. Residues 256 to 258 (HPE) and T273 contribute to the iminosuccinate site. Residue C320 participates in [4Fe-4S] cluster binding.

It belongs to the quinolinate synthase family. Type 3 subfamily. The cofactor is [4Fe-4S] cluster.

It localises to the cytoplasm. It catalyses the reaction iminosuccinate + dihydroxyacetone phosphate = quinolinate + phosphate + 2 H2O + H(+). It functions in the pathway cofactor biosynthesis; NAD(+) biosynthesis; quinolinate from iminoaspartate: step 1/1. Its function is as follows. Catalyzes the condensation of iminoaspartate with dihydroxyacetone phosphate to form quinolinate. The protein is Quinolinate synthase of Bacillus cereus (strain ATCC 10987 / NRS 248).